The primary structure comprises 512 residues: D-alanine--D-alanyl carrier protein ligase (512 aa).

152 to 153 (TS) contributes to the ATP binding site. D199 provides a ligand contact to D-alanine. An ATP-binding site is contributed by 294–299 (NAYGPT). V303 provides a ligand contact to D-alanine. Residues D385, 397–400 (YGGR), and K499 each bind ATP. Position 499 (K499) interacts with D-alanine.

Belongs to the ATP-dependent AMP-binding enzyme family. DltA subfamily.

Its subcellular location is the cytoplasm. The enzyme catalyses holo-[D-alanyl-carrier protein] + D-alanine + ATP = D-alanyl-[D-alanyl-carrier protein] + AMP + diphosphate. Its pathway is cell wall biogenesis; lipoteichoic acid biosynthesis. Its function is as follows. Catalyzes the first step in the D-alanylation of lipoteichoic acid (LTA), the activation of D-alanine and its transfer onto the D-alanyl carrier protein (Dcp) DltC. In an ATP-dependent two-step reaction, forms a high energy D-alanyl-AMP intermediate, followed by transfer of the D-alanyl residue as a thiol ester to the phosphopantheinyl prosthetic group of the Dcp. D-alanylation of LTA plays an important role in modulating the properties of the cell wall in Gram-positive bacteria, influencing the net charge of the cell wall. This chain is D-alanine--D-alanyl carrier protein ligase, found in Streptococcus pyogenes serotype M1.